Reading from the N-terminus, the 420-residue chain is ATP phosphoribosyltransferase regulatory subunit (420 aa).

Belongs to the class-II aminoacyl-tRNA synthetase family. HisZ subfamily. Heteromultimer composed of HisG and HisZ subunits.

It localises to the cytoplasm. Its pathway is amino-acid biosynthesis; L-histidine biosynthesis; L-histidine from 5-phospho-alpha-D-ribose 1-diphosphate: step 1/9. Functionally, required for the first step of histidine biosynthesis. May allow the feedback regulation of ATP phosphoribosyltransferase activity by histidine. This is ATP phosphoribosyltransferase regulatory subunit from Bacillus cereus (strain AH187).